Reading from the N-terminus, the 166-residue chain is Ribonuclease H (166 aa).

Residues 5-147 enclose the RNase H type-1 domain; that stretch reads PRKRVALFTD…VDREARRQAQ (143 aa). The Mg(2+) site is built by D14, E52, D74, and D139. Residues 128-166 are disordered; that stretch reads GHTGHPENERVDREARRQAQSQAKTPCPPRAPTLFHEEA. The segment covering 131–144 has biased composition (basic and acidic residues); it reads GHPENERVDREARR.

Belongs to the RNase H family. In terms of assembly, monomer. It depends on Mg(2+) as a cofactor.

It catalyses the reaction Endonucleolytic cleavage to 5'-phosphomonoester.. Functionally, endonuclease that specifically degrades the RNA of RNA-DNA hybrids. The sequence is that of Ribonuclease H (rnhA) from Thermus thermophilus (strain ATCC 27634 / DSM 579 / HB8).